The following is a 168-amino-acid chain: Thioredoxin Y, chloroplastic (168 aa).

The transit peptide at methionine 1–arginine 58 directs the protein to the chloroplast. The region spanning valine 59–glutamate 165 is the Thioredoxin domain. Catalysis depends on nucleophile residues cysteine 89 and cysteine 92. A disulfide bridge links cysteine 89 with cysteine 92.

Belongs to the thioredoxin family. Plant Y-type subfamily.

It is found in the plastid. The protein localises to the chloroplast. Probable thiol-disulfide oxidoreductase that may participate in various redox reactions. The chain is Thioredoxin Y, chloroplastic from Oryza sativa subsp. japonica (Rice).